Here is a 149-residue protein sequence, read N- to C-terminus: Nucleoside deoxyribosyltransferase (149 aa).

Glutamate 90 functions as the Nucleophile in the catalytic mechanism.

The protein belongs to the nucleoside deoxyribosyltransferase family.

It catalyses the reaction 2-deoxy-D-ribosyl-base(1) + base(2) = 2-deoxy-D-ribosyl-base(2) + base(1).. The protein operates within nucleotide metabolism; nucleotide salvage pathway. In terms of biological role, catalyzes the cleavage of the glycosidic bond of 2'-deoxyribonucleosides and the transfer of the deoxyribosyl moiety to an acceptor purine or pyrimidine base. This chain is Nucleoside deoxyribosyltransferase (ntd), found in Lactobacillus johnsonii (strain CNCM I-12250 / La1 / NCC 533).